The following is a 231-amino-acid chain: Probable calcium-binding protein CML21 (231 aa).

EF-hand domains are found at residues 54 to 89 (DGLR…LEIS), 90 to 125 (FDEE…VYLL), 145 to 180 (PTFE…SGER), and 181 to 216 (SSGR…WVGI). Ca(2+) contacts are provided by D67, D69, N71, S73, and E78. Ca(2+) contacts are provided by D158, N160, D162, Y164, E169, D194, D196, N198, M200, and E205.

Its function is as follows. Potential calcium sensor. The sequence is that of Probable calcium-binding protein CML21 (CML21) from Arabidopsis thaliana (Mouse-ear cress).